Reading from the N-terminus, the 108-residue chain is Cell division topological specificity factor (108 aa).

This sequence belongs to the MinE family.

Its function is as follows. Prevents the cell division inhibition by proteins MinC and MinD at internal division sites while permitting inhibition at polar sites. This ensures cell division at the proper site by restricting the formation of a division septum at the midpoint of the long axis of the cell. The chain is Cell division topological specificity factor from Prochlorococcus marinus (strain AS9601).